A 475-amino-acid chain; its full sequence is Ribulose bisphosphate carboxylase large chain (475 aa).

N123 and T173 together coordinate substrate. The active-site Proton acceptor is K175. K177 is a binding site for substrate. K201, D203, and E204 together coordinate Mg(2+). Position 201 is an N6-carboxylysine (K201). The active-site Proton acceptor is the H294. Substrate-binding residues include R295, H327, and S379.

The protein belongs to the RuBisCO large chain family. Type I subfamily. As to quaternary structure, heterohexadecamer of 8 large chains and 8 small chains; disulfide-linked. The disulfide link is formed within the large subunit homodimers. Interacts with assembly factor Raf1 which helps form the holoenzyme, most interaction (and folding) occurs in the cytoplasm. Mg(2+) is required as a cofactor. Post-translationally, the disulfide bond which can form in the large chain dimeric partners within the hexadecamer appears to be associated with oxidative stress and protein turnover.

The protein resides in the carboxysome. It localises to the cytoplasm. It carries out the reaction 2 (2R)-3-phosphoglycerate + 2 H(+) = D-ribulose 1,5-bisphosphate + CO2 + H2O. The enzyme catalyses D-ribulose 1,5-bisphosphate + O2 = 2-phosphoglycolate + (2R)-3-phosphoglycerate + 2 H(+). Functionally, ruBisCO catalyzes two reactions: the carboxylation of D-ribulose 1,5-bisphosphate, the primary event in carbon dioxide fixation, as well as the oxidative fragmentation of the pentose substrate in the photorespiration process. Both reactions occur simultaneously and in competition at the same active site. In Thermosynechococcus vestitus (strain NIES-2133 / IAM M-273 / BP-1), this protein is Ribulose bisphosphate carboxylase large chain.